The following is a 98-amino-acid chain: NADH-ubiquinone oxidoreductase chain 4L (98 aa).

A run of 3 helical transmembrane segments spans residues 1-21 (MSPV…GLAF), 26-46 (LLSA…AIAL), and 61-81 (MILL…LVAA).

Belongs to the complex I subunit 4L family.

The protein localises to the mitochondrion membrane. It carries out the reaction a ubiquinone + NADH + 5 H(+)(in) = a ubiquinol + NAD(+) + 4 H(+)(out). Core subunit of the mitochondrial membrane respiratory chain NADH dehydrogenase (Complex I) which catalyzes electron transfer from NADH through the respiratory chain, using ubiquinone as an electron acceptor. Part of the enzyme membrane arm which is embedded in the lipid bilayer and involved in proton translocation. In Squalus acanthias (Spiny dogfish), this protein is NADH-ubiquinone oxidoreductase chain 4L (MT-ND4L).